The sequence spans 750 residues: Ribosomal RNA large subunit methyltransferase K/L (750 aa).

The region spanning 46 to 157 (TAYRLCLWSR…RGEAILSLDL (112 aa)) is the THUMP domain.

The protein belongs to the methyltransferase superfamily. RlmKL family.

Its subcellular location is the cytoplasm. It catalyses the reaction guanosine(2445) in 23S rRNA + S-adenosyl-L-methionine = N(2)-methylguanosine(2445) in 23S rRNA + S-adenosyl-L-homocysteine + H(+). The enzyme catalyses guanosine(2069) in 23S rRNA + S-adenosyl-L-methionine = N(2)-methylguanosine(2069) in 23S rRNA + S-adenosyl-L-homocysteine + H(+). Functionally, specifically methylates the guanine in position 2445 (m2G2445) and the guanine in position 2069 (m7G2069) of 23S rRNA. The sequence is that of Ribosomal RNA large subunit methyltransferase K/L from Pseudomonas syringae pv. syringae (strain B728a).